A 284-amino-acid polypeptide reads, in one-letter code: Adenylate kinase 1, chloroplastic (284 aa).

The N-terminal 36 residues, 1-36 (MARLVRVARSSSLFGFGNRFYSTSAEASHASSPSPF), are a transit peptide targeting the chloroplast. 61-66 (GVGKGT) provides a ligand contact to ATP. The NMP stretch occupies residues 81–110 (ATGDLVREELASSGPLSQKLSEIVNQGKLV). AMP contacts are provided by residues Thr-82, Arg-87, 108-110 (KLV), 138-141 (GFPR), and Gln-145. Positions 174-222 (GRRTCSQCGKGFNVAHINLKGENGRPGISMDPLLPPHQCMSKLVTRADD) are LID. Residue Arg-175 coordinates ATP. Residues Arg-219 and Arg-230 each coordinate AMP. Residue Gly-258 coordinates ATP.

This sequence belongs to the adenylate kinase family. As to quaternary structure, monomer. In terms of tissue distribution, highly expressed in flowers and at lower levels in roots, leaves and stems.

The protein resides in the plastid. It localises to the chloroplast stroma. The catalysed reaction is AMP + ATP = 2 ADP. In terms of biological role, catalyzes the reversible transfer of the terminal phosphate group between ATP and AMP. Plays an important role in cellular energy homeostasis, adenine nucleotide metabolism and plant growth. This Arabidopsis thaliana (Mouse-ear cress) protein is Adenylate kinase 1, chloroplastic (ADK).